The sequence spans 259 residues: Phosphatidylglycerol--prolipoprotein diacylglyceryl transferase (259 aa).

The next 4 membrane-spanning stretches (helical) occupy residues 12–32, 46–66, 83–103, and 109–129; these read LSLH…VYLA, IIDF…IYYV, IWNG…VLFV, and VLNP…AQAI. Arg-131 is an a 1,2-diacyl-sn-glycero-3-phospho-(1'-sn-glycerol) binding site. 3 consecutive transmembrane segments (helical) span residues 167–187, 194–214, and 226–246; these read VPTF…IMVW, LLDG…RLVI, and GIRV…VFIF.

It belongs to the Lgt family.

The protein resides in the cell membrane. It carries out the reaction L-cysteinyl-[prolipoprotein] + a 1,2-diacyl-sn-glycero-3-phospho-(1'-sn-glycerol) = an S-1,2-diacyl-sn-glyceryl-L-cysteinyl-[prolipoprotein] + sn-glycerol 1-phosphate + H(+). Its pathway is protein modification; lipoprotein biosynthesis (diacylglyceryl transfer). Its function is as follows. Catalyzes the transfer of the diacylglyceryl group from phosphatidylglycerol to the sulfhydryl group of the N-terminal cysteine of a prolipoprotein, the first step in the formation of mature lipoproteins. In Streptococcus equi subsp. zooepidemicus (strain MGCS10565), this protein is Phosphatidylglycerol--prolipoprotein diacylglyceryl transferase.